The chain runs to 485 residues: Elongation factor TuB, chloroplastic (485 aa).

A chloroplast-targeting transit peptide spans 1-76; the sequence is MASISAASAT…TTHPRRFTVR (76 aa). Residues 86–290 form the tr-type G domain; it reads KPHVNIGTIG…NVDEYIPIPQ (205 aa). A G1 region spans residues 95 to 102; that stretch reads GHVDHGKT. 95 to 102 is a GTP binding site; the sequence is GHVDHGKT. Positions 136-140 are G2; the sequence is GITIN. Residues 157–160 are G3; sequence DCPG. Residues 157-161 and 212-215 each bind GTP; these read DCPGH and NKQD. Positions 212 to 215 are G4; the sequence is NKQD. Residues 250 to 252 form a G5 region; it reads SAL.

This sequence belongs to the TRAFAC class translation factor GTPase superfamily. Classic translation factor GTPase family. EF-Tu/EF-1A subfamily.

It is found in the plastid. It localises to the chloroplast. Functionally, this protein promotes the GTP-dependent binding of aminoacyl-tRNA to the A-site of ribosomes during protein biosynthesis. The chain is Elongation factor TuB, chloroplastic (TUFB) from Nicotiana sylvestris (Wood tobacco).